The primary structure comprises 493 residues: Cytochrome P450 monooxygenase mfmF (493 aa).

The next 2 membrane-spanning stretches (helical) occupy residues 3–23 and 301–321; these read SLIP…RLFF and VLFA…FHLV. Cysteine 440 contributes to the heme binding site.

Belongs to the cytochrome P450 family. Heme serves as cofactor.

Its subcellular location is the membrane. Its pathway is secondary metabolite biosynthesis; terpenoid biosynthesis. Its function is as follows. Cytochrome P450 monooxygenase; part of the gene cluster that mediates the biosynthesis of the phthalide-terpenoid hybrid 11'-O-desmethylfendlerol. Within the pathway, mfmF catalyzes C-3 hydroxylation of 5-hydroxy-4-(hydroxymethyl)-7-methoxy-6-methylphthalide to yield cyclopolic acid. The biosynthesis of 11'-O-desmethylfendlerol begins with the NR-PKS mfmB that forms 3,5-dimethylorsellinic acid (DMOA), which is then transformed into the phthalide 5,7-dihydroxy-4-(hydroxymethyl)-6-methylphthalide by the cytochrome P450 monooxygenase mfmA and the hydrolase mfmC. Subsequently, the methyltransferase mfmE catalyzes 7-O-methylation to yield 5-hydroxy-4-(hydroxymethyl)-7-methoxy-6-methylphthalide, which undergoes C-3 hydroxylation by the cytochrome P450 monooxygenase mfmF. The resultant cyclopolic acid (2,5-dihydroxy-4-(hydroxymethyl)-7-methoxy-6-methylphthalide) is then farnesylated by the DMATS-type prenyltransferase mfmD to afford 5-O-farnesylcyclopolic acid. Finally, the Pyr4-family terpene cyclase mfmH cyclizes the farnesyl moiety of 5-O-farnesylcyclopolic acid into a drimane-like structure, thus completing the biosynthesis of 11'-O-desmethylfendlerol. The polypeptide is Cytochrome P450 monooxygenase mfmF (Annulohypoxylon moriforme (Filamentous fungus)).